Here is a 494-residue protein sequence, read N- to C-terminus: PTS system cellobiose-specific EIIC component (494 aa).

Positions 8 to 481 (MEKYLVPVAA…IITFVIWVPF (474 aa)) constitute a PTS EIIC type-3 domain. Transmembrane regions (helical) follow at residues 32-52 (FIGM…SAIV), 92-112 (ISAL…AFSW), 119-139 (AYGV…FAGL), 188-208 (AYFT…KLML), 227-247 (FLAI…YYII), 274-294 (IFSV…GLHG), 355-375 (AFAW…IILF), 406-426 (VVLN…SVII), and 463-483 (AIVL…PFVI).

The protein resides in the cell membrane. Its function is as follows. The phosphoenolpyruvate-dependent sugar phosphotransferase system (PTS), a major carbohydrate active transport system, catalyzes the phosphorylation of incoming sugar substrates concomitant with their translocation across the cell membrane. Involved in cellobiose transport with PtcA and PtcB. This system can also transport lactose. The chain is PTS system cellobiose-specific EIIC component from Lactococcus lactis subsp. lactis (strain IL1403) (Streptococcus lactis).